The sequence spans 1022 residues: Probable beta-galactosidase B (1022 aa).

The N-terminal stretch at 1–20 is a signal peptide; it reads MARFPQLLFLLLASIGLLSA. Residue Asn-23 is glycosylated (N-linked (GlcNAc...) asparagine). Tyr-90 contacts substrate. Asn-100 is a glycosylation site (N-linked (GlcNAc...) asparagine). Substrate is bound by residues Asn-135, Ala-136, Glu-137, and Asn-195. Glu-196 serves as the catalytic Proton donor. Residue Asn-211 is glycosylated (N-linked (GlcNAc...) asparagine). Position 265 (Tyr-265) interacts with substrate. A disulfide bridge connects residues Cys-271 and Cys-324. The Nucleophile role is filled by Glu-308. Residue Tyr-373 participates in substrate binding. Residues Asn-411, Asn-456, Asn-541, Asn-554, Asn-626, Asn-777, Asn-790, Asn-832, Asn-880, and Asn-881 are each glycosylated (N-linked (GlcNAc...) asparagine).

It belongs to the glycosyl hydrolase 35 family.

The protein resides in the secreted. The enzyme catalyses Hydrolysis of terminal non-reducing beta-D-galactose residues in beta-D-galactosides.. In terms of biological role, cleaves beta-linked terminal galactosyl residues from gangliosides, glycoproteins, and glycosaminoglycans. The protein is Probable beta-galactosidase B (lacB) of Aspergillus terreus (strain NIH 2624 / FGSC A1156).